The primary structure comprises 447 residues: Ribosomal protein uS12 methylthiotransferase RimO (447 aa).

Residues 10 to 120 form the MTTase N-terminal domain; the sequence is PKVGFVSLGC…VVNAVHDVVP (111 aa). 6 residues coordinate [4Fe-4S] cluster: cysteine 19, cysteine 55, cysteine 84, cysteine 153, cysteine 157, and cysteine 160. Positions 139–377 constitute a Radical SAM core domain; sequence LTPRHYAYLK…MAHQQAISAA (239 aa). The region spanning 380 to 447 is the TRAM domain; that stretch reads QMKIGKEIEV…DEYDLWAEML (68 aa).

It belongs to the methylthiotransferase family. RimO subfamily. It depends on [4Fe-4S] cluster as a cofactor.

It localises to the cytoplasm. The enzyme catalyses L-aspartate(89)-[ribosomal protein uS12]-hydrogen + (sulfur carrier)-SH + AH2 + 2 S-adenosyl-L-methionine = 3-methylsulfanyl-L-aspartate(89)-[ribosomal protein uS12]-hydrogen + (sulfur carrier)-H + 5'-deoxyadenosine + L-methionine + A + S-adenosyl-L-homocysteine + 2 H(+). Its function is as follows. Catalyzes the methylthiolation of an aspartic acid residue of ribosomal protein uS12. This is Ribosomal protein uS12 methylthiotransferase RimO from Pseudomonas syringae pv. syringae (strain B728a).